The primary structure comprises 141 residues: Hemoglobin subunit alpha (141 aa).

The Globin domain maps to Val-1 to Arg-141. Ser-3 is subject to Phosphoserine. N6-succinyllysine is present on residues Lys-7 and Lys-11. An N6-acetyllysine; alternate modification is found at Lys-16. Lys-16 carries the N6-succinyllysine; alternate modification. Tyr-24 carries the phosphotyrosine modification. Lys-40 carries the N6-succinyllysine modification. A Phosphoserine modification is found at Ser-49. Position 58 (His-58) interacts with O2. His-87 contacts heme b. Residue Ser-102 is modified to Phosphoserine. Thr-108 is subject to Phosphothreonine. Ser-124 is subject to Phosphoserine. 2 positions are modified to phosphothreonine: Thr-134 and Thr-137. The residue at position 138 (Ser-138) is a Phosphoserine.

This sequence belongs to the globin family. Heterotetramer of two alpha chains and two beta chains. In terms of tissue distribution, red blood cells.

Involved in oxygen transport from the lung to the various peripheral tissues. In terms of biological role, hemopressin acts as an antagonist peptide of the cannabinoid receptor CNR1. Hemopressin-binding efficiently blocks cannabinoid receptor CNR1 and subsequent signaling. This Lama glama (Llama) protein is Hemoglobin subunit alpha (HBA).